The primary structure comprises 380 residues: Chaperone protein DnaJ (380 aa).

The region spanning aspartate 5–glycine 70 is the J domain. The CR-type zinc-finger motif lies at glycine 139 to glutamine 217. Positions 152, 155, 169, 172, 191, 194, 205, and 208 each coordinate Zn(2+). CXXCXGXG motif repeat units follow at residues cysteine 152–glycine 159, cysteine 169–glycine 176, cysteine 191–glycine 198, and cysteine 205–glycine 212.

This sequence belongs to the DnaJ family. Homodimer. It depends on Zn(2+) as a cofactor.

Its subcellular location is the cytoplasm. In terms of biological role, participates actively in the response to hyperosmotic and heat shock by preventing the aggregation of stress-denatured proteins and by disaggregating proteins, also in an autonomous, DnaK-independent fashion. Unfolded proteins bind initially to DnaJ; upon interaction with the DnaJ-bound protein, DnaK hydrolyzes its bound ATP, resulting in the formation of a stable complex. GrpE releases ADP from DnaK; ATP binding to DnaK triggers the release of the substrate protein, thus completing the reaction cycle. Several rounds of ATP-dependent interactions between DnaJ, DnaK and GrpE are required for fully efficient folding. Also involved, together with DnaK and GrpE, in the DNA replication of plasmids through activation of initiation proteins. The protein is Chaperone protein DnaJ of Laribacter hongkongensis (strain HLHK9).